We begin with the raw amino-acid sequence, 341 residues long: Methionine import ATP-binding protein MetN (341 aa).

The region spanning 9 to 247 (ISVQDVSKKL…SENSITNELF (239 aa)) is the ABC transporter domain. 41 to 48 (GHSGSGKT) is an ATP binding site.

It belongs to the ABC transporter superfamily. Methionine importer (TC 3.A.1.24) family. The complex is composed of two ATP-binding proteins (MetN), two transmembrane proteins (MetI) and a solute-binding protein (MetQ).

The protein resides in the cell inner membrane. It catalyses the reaction L-methionine(out) + ATP + H2O = L-methionine(in) + ADP + phosphate + H(+). The enzyme catalyses D-methionine(out) + ATP + H2O = D-methionine(in) + ADP + phosphate + H(+). Its function is as follows. Part of the ABC transporter complex MetNIQ involved in methionine import. Responsible for energy coupling to the transport system. In Chlamydia pneumoniae (Chlamydophila pneumoniae), this protein is Methionine import ATP-binding protein MetN.